We begin with the raw amino-acid sequence, 527 residues long: Type II methyltransferase M.XamI (527 aa).

This sequence belongs to the N(4)/N(6)-methyltransferase family.

It carries out the reaction a 2'-deoxyadenosine in DNA + S-adenosyl-L-methionine = an N(6)-methyl-2'-deoxyadenosine in DNA + S-adenosyl-L-homocysteine + H(+). In terms of biological role, a gamma subtype methylase that recognizes the double-stranded sequence 5'-GTCGAC-3', possibly methylates A-5 on both strands, and protects the DNA from cleavage by the XamI endonuclease. The polypeptide is Type II methyltransferase M.XamI (Xanthomonas campestris pv. amaranthicola).